The following is a 396-amino-acid chain: Proteasome-activating nucleotidase (396 aa).

Residues 16–57 (ITYLKRRIRQLELQVRMLEADKERLERELSRLRSEMSRLRQP) adopt a coiled-coil conformation. ATP contacts are provided by residues 181 to 186 (GCGKTL) and H320. Residues 394–396 (IYG) form a docks into pockets in the proteasome alpha-ring to cause gate opening region.

It belongs to the AAA ATPase family. Homohexamer. The hexameric complex has a two-ring architecture resembling a top hat that caps the 20S proteasome core at one or both ends. Upon ATP-binding, the C-terminus of PAN interacts with the alpha-rings of the proteasome core by binding to the intersubunit pockets.

The protein localises to the cytoplasm. ATPase which is responsible for recognizing, binding, unfolding and translocation of substrate proteins into the archaeal 20S proteasome core particle. Is essential for opening the gate of the 20S proteasome via an interaction with its C-terminus, thereby allowing substrate entry and access to the site of proteolysis. Thus, the C-termini of the proteasomal ATPase function like a 'key in a lock' to induce gate opening and therefore regulate proteolysis. Unfolding activity requires energy from ATP hydrolysis, whereas ATP binding alone promotes ATPase-20S proteasome association which triggers gate opening, and supports translocation of unfolded substrates. In Pyrococcus abyssi (strain GE5 / Orsay), this protein is Proteasome-activating nucleotidase.